The sequence spans 87 residues: Small ribosomal subunit protein bS16 (87 aa).

It belongs to the bacterial ribosomal protein bS16 family.

This Buchnera aphidicola subsp. Baizongia pistaciae (strain Bp) protein is Small ribosomal subunit protein bS16.